A 62-amino-acid polypeptide reads, in one-letter code: Keratin-associated protein 19-5 (62 aa).

A 14 X 2 AA repeats of G-[YCGS] region spans residues 5-56 (GSYYGGLGSGIRGFGNLGYGYGCGCGFGGYGYGSGYGRYGYGYPRPLYYGGY).

This sequence belongs to the KRTAP type 19 family. As to quaternary structure, interacts with hair keratins. In terms of tissue distribution, expressed in skin during two hair growth cycles. Expression restricted to the cortical cells of hair follicles, appearing first in the cortical cells processing the flat nuclei located a few cells above the dermal papilla.

Functionally, in the hair cortex, hair keratin intermediate filaments are embedded in an interfilamentous matrix, consisting of hair keratin-associated proteins (KRTAP), which are essential for the formation of a rigid and resistant hair shaft through their extensive disulfide bond cross-linking with abundant cysteine residues of hair keratins. The matrix proteins include the high-sulfur and high-glycine-tyrosine keratins. The polypeptide is Keratin-associated protein 19-5 (Krtap19-5) (Mus musculus (Mouse)).